We begin with the raw amino-acid sequence, 41 residues long: MKIRNSLKSLKDRHRDNRVIRRRGRVYVINKTQKRFKARQG.

The protein belongs to the bacterial ribosomal protein bL36 family.

The chain is Large ribosomal subunit protein bL36 from Novosphingobium aromaticivorans (strain ATCC 700278 / DSM 12444 / CCUG 56034 / CIP 105152 / NBRC 16084 / F199).